The following is a 247-amino-acid chain: Reticulon-like protein B8 (247 aa).

Residues 61 to 247 (SADVLLWRNK…SGKFGLKKRE (187 aa)) form the Reticulon domain. A run of 3 helical transmembrane segments spans residues 71–91 (KISA…EWIN), 92–112 (FHFL…QFVW), and 166–186 (FLMA…CNFL).

It localises to the endoplasmic reticulum membrane. This Arabidopsis thaliana (Mouse-ear cress) protein is Reticulon-like protein B8 (RTNLB8).